The chain runs to 23 residues: Protein DCL, chloroplastic (23 aa).

The protein localises to the plastid. It localises to the chloroplast. Functionally, has a function in the early stage of chloroplast development and palisade cell morphogenesis. This chain is Protein DCL, chloroplastic, found in Pseudotsuga menziesii (Douglas-fir).